A 139-amino-acid chain; its full sequence is MLDKLQNTFHFQQEALSLRNKRQEILAANIANADTPGFQARDIDFAAELKKTMENGRTGSHGLQLTMTSERHIPIKPGYRLEADLLYRVPHQTSMDGNTVDMDMERSNLYVPDNSVKYLADVTFINSQVKSMMAVLQQG.

The protein belongs to the flagella basal body rod proteins family. In terms of assembly, the basal body constitutes a major portion of the flagellar organelle and consists of a number of rings mounted on a central rod. In Gram-negative bacteria, at least four rings, L, P, S and M are present, whereas Gram-positive bacteria lack the L and P rings. The rod consists of about 26 subunits of FlgG in the distal portion, and FlgB, FlgC and FlgF build up the proximal portion of the rod with about 6 subunits each. Rod assembly occurs by export via the flagellum-specific pathway of its constituent proteins and by their incorporation into the rod structure in the probable order of FlgB, FlgC, FlgF and FlgG. Another protein, FliE, also assembles onto the stable rod structure.

It is found in the bacterial flagellum basal body. Functionally, structural component of flagellum, the bacterial motility apparatus. Part of the rod structure of flagellar basal body. In Proteus mirabilis, this protein is Flagellar basal body rod protein FlgB.